The primary structure comprises 190 residues: MAMLRPALTLLVFLTILTGGVYPLATTVLGQWWFKDQAEGSLIRQHDEVRGSRLIGQAFSEAKYFQGRPSATAEAPYNPMASGGSNLAASNPALDKEVQARVQALRAANPDARAAVPVELVTASASGLDYGITPDAAFWQAPRVAQARGISEAEVGRLIRENTDAPLAGFLGQPVVNVLKLNMALDALQP.

The chain crosses the membrane as a helical span at residues 10 to 30 (LLVFLTILTGGVYPLATTVLG).

The protein belongs to the KdpC family. In terms of assembly, the system is composed of three essential subunits: KdpA, KdpB and KdpC.

The protein resides in the cell inner membrane. In terms of biological role, part of the high-affinity ATP-driven potassium transport (or Kdp) system, which catalyzes the hydrolysis of ATP coupled with the electrogenic transport of potassium into the cytoplasm. This subunit acts as a catalytic chaperone that increases the ATP-binding affinity of the ATP-hydrolyzing subunit KdpB by the formation of a transient KdpB/KdpC/ATP ternary complex. The chain is Potassium-transporting ATPase KdpC subunit from Cronobacter sakazakii (strain ATCC BAA-894) (Enterobacter sakazakii).